Reading from the N-terminus, the 700-residue chain is Methionine--tRNA ligase (700 aa).

The 'HIGH' region signature appears at 12-22 (PYANGNFHIGH). Positions 143, 146, 156, and 159 each coordinate Zn(2+). A 'KMSKS' region motif is present at residues 348–352 (KMSKS). Lys351 provides a ligand contact to ATP. The tRNA-binding domain maps to 594–700 (DFSKIDLRIA…AGAQPGMRVH (107 aa)).

Belongs to the class-I aminoacyl-tRNA synthetase family. MetG type 1 subfamily. Homodimer. Requires Zn(2+) as cofactor.

The protein resides in the cytoplasm. It catalyses the reaction tRNA(Met) + L-methionine + ATP = L-methionyl-tRNA(Met) + AMP + diphosphate. In terms of biological role, is required not only for elongation of protein synthesis but also for the initiation of all mRNA translation through initiator tRNA(fMet) aminoacylation. This Albidiferax ferrireducens (strain ATCC BAA-621 / DSM 15236 / T118) (Rhodoferax ferrireducens) protein is Methionine--tRNA ligase.